The sequence spans 70 residues: MPLIQVTLIEGRTMEAKAALIGSLTQAAVATLGAPRESVRVIIQEVPAAHWGVAGVPKSAAKEPPRDSKA.

Pro-2 (proton acceptor; via imino nitrogen) is an active-site residue.

It belongs to the 4-oxalocrotonate tautomerase family.

In Ralstonia nicotianae (strain ATCC BAA-1114 / GMI1000) (Ralstonia solanacearum), this protein is Probable tautomerase RSp0893.